A 399-amino-acid polypeptide reads, in one-letter code: Succinate--CoA ligase [ADP-forming] subunit beta (399 aa).

In terms of domain architecture, ATP-grasp spans 9–254 (KAVLQPFGVS…ETEEDAKEIE (246 aa)). ATP contacts are provided by residues lysine 46, 53–55 (GRG), glutamate 109, serine 112, and glutamate 117. Positions 209 and 223 each coordinate Mg(2+). Residues asparagine 274 and 331-333 (GIM) each bind substrate.

The protein belongs to the succinate/malate CoA ligase beta subunit family. As to quaternary structure, heterotetramer of two alpha and two beta subunits. Requires Mg(2+) as cofactor.

The enzyme catalyses succinate + ATP + CoA = succinyl-CoA + ADP + phosphate. It carries out the reaction GTP + succinate + CoA = succinyl-CoA + GDP + phosphate. The protein operates within carbohydrate metabolism; tricarboxylic acid cycle; succinate from succinyl-CoA (ligase route): step 1/1. In terms of biological role, succinyl-CoA synthetase functions in the citric acid cycle (TCA), coupling the hydrolysis of succinyl-CoA to the synthesis of either ATP or GTP and thus represents the only step of substrate-level phosphorylation in the TCA. The beta subunit provides nucleotide specificity of the enzyme and binds the substrate succinate, while the binding sites for coenzyme A and phosphate are found in the alpha subunit. The chain is Succinate--CoA ligase [ADP-forming] subunit beta from Rhodopseudomonas palustris (strain BisB18).